Reading from the N-terminus, the 412-residue chain is Argininosuccinate synthase (412 aa).

ATP is bound by residues 10-18 (AYSGGLDTS) and alanine 36. Positions 87 and 92 each coordinate L-citrulline. Tyrosine 87 is subject to Phosphotyrosine. Lysine 112 carries the post-translational modification N6-acetyllysine. At tyrosine 113 the chain carries Phosphotyrosine. 115-123 (SHGATGKGN) is an ATP binding site. Positions 119, 123, and 124 each coordinate L-aspartate. An L-citrulline-binding site is contributed by asparagine 123. Arginine 127 contacts L-citrulline. 2 positions are modified to N6-acetyllysine; by CLOCK: lysine 165 and lysine 176. Residues serine 177 and serine 180 each carry the phosphoserine modification. Residues serine 180 and serine 189 each coordinate L-citrulline. Position 219 is a phosphothreonine (threonine 219). L-citrulline contacts are provided by glutamate 270 and tyrosine 282.

Belongs to the argininosuccinate synthase family. Type 1 subfamily. In terms of assembly, homotetramer. Interacts with NMRAL1. Interacts with CLOCK; in a circadian manner. Forms tissue-specific complexes with ASL, SLC7A1, HSP90AA1 and nitric oxide synthase NOS1, NOS2 or NOS3; the complex regulates cell-autonomous L-arginine synthesis and citrulline recycling while channeling extracellular L-arginine to nitric oxide synthesis pathway. Post-translationally, acetylated by CLOCK in a circadian manner which negatively regulates its enzyme activity. Deacetylated by histone deacetylases.

The protein localises to the cytoplasm. The protein resides in the cytosol. It catalyses the reaction L-citrulline + L-aspartate + ATP = 2-(N(omega)-L-arginino)succinate + AMP + diphosphate + H(+). It functions in the pathway amino-acid biosynthesis; L-arginine biosynthesis; L-arginine from L-ornithine and carbamoyl phosphate: step 2/3. The protein operates within nitrogen metabolism; urea cycle; (N(omega)-L-arginino)succinate from L-aspartate and L-citrulline: step 1/1. One of the enzymes of the urea cycle, the metabolic pathway transforming neurotoxic amonia produced by protein catabolism into inocuous urea in the liver of ureotelic animals. Catalyzes the formation of arginosuccinate from aspartate, citrulline and ATP and together with ASL it is responsible for the biosynthesis of arginine in most body tissues. Indirectly, may be involved in the control of blood pressure. This Rattus norvegicus (Rat) protein is Argininosuccinate synthase.